The primary structure comprises 495 residues: Phosphomethylpyrimidine synthase (495 aa).

Residues Asn-125, Met-154, Tyr-183, His-219, 239 to 241 (SRG), 280 to 283 (DGLR), and Glu-319 each bind substrate. His-323 serves as a coordination point for Zn(2+). Tyr-346 serves as a coordination point for substrate. Zn(2+) is bound at residue His-387. Positions 467, 470, and 475 each coordinate [4Fe-4S] cluster.

This sequence belongs to the ThiC family. The cofactor is [4Fe-4S] cluster.

The enzyme catalyses 5-amino-1-(5-phospho-beta-D-ribosyl)imidazole + S-adenosyl-L-methionine = 4-amino-2-methyl-5-(phosphooxymethyl)pyrimidine + CO + 5'-deoxyadenosine + formate + L-methionine + 3 H(+). The protein operates within cofactor biosynthesis; thiamine diphosphate biosynthesis. In terms of biological role, catalyzes the synthesis of the hydroxymethylpyrimidine phosphate (HMP-P) moiety of thiamine from aminoimidazole ribotide (AIR) in a radical S-adenosyl-L-methionine (SAM)-dependent reaction. This Leptospira interrogans serogroup Icterohaemorrhagiae serovar copenhageni (strain Fiocruz L1-130) protein is Phosphomethylpyrimidine synthase.